Reading from the N-terminus, the 264-residue chain is Hydroxyethylthiazole kinase (264 aa).

Position 45 (M45) interacts with substrate. The ATP site is built by R121 and S167. Residue G194 participates in substrate binding.

This sequence belongs to the Thz kinase family. Mg(2+) serves as cofactor.

The enzyme catalyses 5-(2-hydroxyethyl)-4-methylthiazole + ATP = 4-methyl-5-(2-phosphooxyethyl)-thiazole + ADP + H(+). It participates in cofactor biosynthesis; thiamine diphosphate biosynthesis; 4-methyl-5-(2-phosphoethyl)-thiazole from 5-(2-hydroxyethyl)-4-methylthiazole: step 1/1. Functionally, catalyzes the phosphorylation of the hydroxyl group of 4-methyl-5-beta-hydroxyethylthiazole (THZ). The protein is Hydroxyethylthiazole kinase of Aliivibrio salmonicida (strain LFI1238) (Vibrio salmonicida (strain LFI1238)).